The primary structure comprises 692 residues: Proprotein convertase subtilisin/kexin type 9 (692 aa).

The signal sequence occupies residues 1–30 (MGTVSSRRSWWPLPLPLLLLLLLGPAGARA). Positions 31–152 (QEDEDGDYEE…IEEDSSVFAQ (122 aa)) are excised as a propeptide. Tyr-38 is modified (sulfotyrosine). Ser-47 is subject to Phosphoserine. The 73-residue stretch at 77–149 (TYVVVLKEET…VDYIEEDSSV (73 aa)) folds into the Inhibitor I9 domain. The 290-residue stretch at 155 to 444 (PWNLERITPA…VLTPNLVAAL (290 aa)) folds into the Peptidase S8 domain. Residues Asp-186 and His-226 each act as charge relay system in the active site. Cystine bridges form between Cys-223–Cys-255 and Cys-323–Cys-358. Residue Ser-386 is the Charge relay system of the active site. The C-terminal domain stretch occupies residues 450 to 692 (RAGWQLFCRT…HLVQASQELQ (243 aa)). Intrachain disulfides connect Cys-457–Cys-527, Cys-477–Cys-526, and Cys-486–Cys-509. A glycan (N-linked (GlcNAc...) asparagine) is linked at Asn-533. Cystine bridges form between Cys-534/Cys-601, Cys-552/Cys-600, Cys-562/Cys-588, Cys-608/Cys-679, Cys-626/Cys-678, and Cys-635/Cys-654. Phosphoserine is present on Ser-688.

The protein belongs to the peptidase S8 family. In terms of assembly, monomer. Can self-associate to form dimers and higher multimers which may have increased LDLR degrading activity. The precursor protein but not the mature protein may form multimers. Interacts with APOB, VLDLR, LRP8/APOER2 and BACE1. The full-length immature form (pro-PCSK9) interacts with SCNN1A, SCNN1B and SCNN1G. The pro-PCSK9 form (via C-terminal domain) interacts with LDLR. Interacts (via the C-terminal domain) with ANXA2 (via repeat Annexin 1); the interaction inhibits the degradation of LDLR. It depends on Ca(2+) as a cofactor. In terms of processing, cleavage by furin and PCSK5 generates a truncated inactive protein that is unable to induce LDLR degradation. Undergoes autocatalytic cleavage in the endoplasmic reticulum to release the propeptide from the N-terminus and the cleavage of the propeptide is strictly required for its maturation and activation. The cleaved propeptide however remains associated with the catalytic domain through non-covalent interactions, preventing potential substrates from accessing its active site. As a result, it is secreted from cells as a propeptide-containing, enzymatically inactive protein. Post-translationally, phosphorylation protects the propeptide against proteolysis.

The protein localises to the cytoplasm. The protein resides in the secreted. It is found in the endosome. It localises to the lysosome. Its subcellular location is the cell surface. The protein localises to the endoplasmic reticulum. The protein resides in the golgi apparatus. Its proteolytic activity is autoinhibited by the non-covalent binding of the propeptide to the catalytic domain. Inhibited by EGTA. Functionally, crucial player in the regulation of plasma cholesterol homeostasis. Binds to low-density lipid receptor family members: low density lipoprotein receptor (LDLR), very low density lipoprotein receptor (VLDLR), apolipoprotein E receptor (LRP1/APOER) and apolipoprotein receptor 2 (LRP8/APOER2), and promotes their degradation in intracellular acidic compartments. Acts via a non-proteolytic mechanism to enhance the degradation of the hepatic LDLR through a clathrin LDLRAP1/ARH-mediated pathway. May prevent the recycling of LDLR from endosomes to the cell surface or direct it to lysosomes for degradation. Can induce ubiquitination of LDLR leading to its subsequent degradation. Inhibits intracellular degradation of APOB via the autophagosome/lysosome pathway in a LDLR-independent manner. Involved in the disposal of non-acetylated intermediates of BACE1 in the early secretory pathway. Inhibits epithelial Na(+) channel (ENaC)-mediated Na(+) absorption by reducing ENaC surface expression primarily by increasing its proteasomal degradation. Regulates neuronal apoptosis via modulation of LRP8/APOER2 levels and related anti-apoptotic signaling pathways. This is Proprotein convertase subtilisin/kexin type 9 (PCSK9) from Macaca nemestrina (Pig-tailed macaque).